The sequence spans 82 residues: Cyclin-dependent protein kinase inhibitor SMR5 (82 aa).

Residues 1–26 (MEEKNYDDGDTVTVDDDYQMGCTTPT) are disordered. Positions 8 to 18 (DGDTVTVDDDY) are enriched in acidic residues.

As to quaternary structure, interacts with CDKA-1 and D-type cyclins. As to expression, expressed in columella cells in the roots and in root meristems after induction.

Functionally, probable cyclin-dependent protein kinase (CDK) inhibitor that functions as a repressor of mitosis in the endoreduplication cell cycle. Acts as a potent cell cycle inhibitor, regulating a hydroxyurea-dependent checkpoint in leaves. Essential to activate a high-light-dependent cell cycle checkpoint. The polypeptide is Cyclin-dependent protein kinase inhibitor SMR5 (Arabidopsis thaliana (Mouse-ear cress)).